The following is a 73-amino-acid chain: Cell division protein ZapB (73 aa).

Positions 3-67 form a coiled coil; the sequence is LELLSKLETK…WNDKVTGLVG (65 aa).

Belongs to the ZapB family. Homodimer. The ends of the coiled-coil dimer bind to each other, forming polymers. Interacts with FtsZ.

It is found in the cytoplasm. Functionally, non-essential, abundant cell division factor that is required for proper Z-ring formation. It is recruited early to the divisome by direct interaction with FtsZ, stimulating Z-ring assembly and thereby promoting cell division earlier in the cell cycle. Its recruitment to the Z-ring requires functional FtsA or ZipA. This Shewanella sp. (strain ANA-3) protein is Cell division protein ZapB.